The sequence spans 681 residues: MELLYQLAWLIPVLPLFGATVVGIGLISFNQATNKLRQINAVFIISCLGAALVMSGALLWDQIQGHASYAQMIEWASAGSFHLEMGYVIDHLSALMLVIVTSVALLVMIYTDGYMAHDPGYVRFYAYLSLFASSMLGLVISPNLVQVYIFWELVGMCSYLLIGFWYDRKAAADACQKAFVTNRVGDFGLLLGILGLYWATGSFDFGTIGERLEGLVSSGVLSGAIAAILAILVFLGPVAKSAQFPLHVWLPDAMEGPTPISALIHAATMVAAGVFLVARMYPVFEPIPVVMNTIAFTGCFTAFLGATIALTQNDIKKGLAYSTISQLGYMVMAMGIGAYSAGLFHLMTHAYFKAMLFLCSGSVIHGMEGVVGHDPILAQDMRIMGGLRKYMPITATCFLIGTLAICGIPPFAGFWSKDEILGLAFQANPLLWFVGWATAGMTAFYMFRMYFMTFEGGFRGNDQEAKDGVLQFYGLLPNFGPGAMNVKELDHEAGHDDHGHSSEPHESPLTMTFPLMALAVPSVLIGLLGRPWANQFEAFIHAPGEVVEHAAEFEWGEFYVMAGNSIGIALIGITVASLMYWQHKFDPKVLAEKFPSLYQLSLNKWYFDDLYDKLFVQGSRRVARQIMEVDYKVIDGAVNLTGLVTLVSGEGLKYLENGRAQFYALIVFGAVLGFVIVFSLT.

16 helical membrane passes run 7–27, 39–59, 89–109, 120–140, 144–164, 188–208, 219–239, 258–278, 289–309, 327–347, 352–372, 395–415, 420–440, 509–529, 558–578, and 660–680; these read LAWL…IGLI, INAV…GALL, IDHL…LVMI, GYVR…GLVI, LVQV…LIGF, GLLL…FGTI, GVLS…GPVA, TPIS…FLVA, VVMN…ATIA, LGYM…FHLM, FKAM…GVVG, ATCF…AGFW, ILGL…ATAG, LTMT…GLLG, FYVM…VASL, and AQFY…VFSL.

The protein belongs to the complex I subunit 5 family.

Its subcellular location is the cell membrane. It carries out the reaction a plastoquinone + NADH + (n+1) H(+)(in) = a plastoquinol + NAD(+) + n H(+)(out). The catalysed reaction is a plastoquinone + NADPH + (n+1) H(+)(in) = a plastoquinol + NADP(+) + n H(+)(out). In terms of biological role, NDH-1 shuttles electrons from NAD(P)H, via FMN and iron-sulfur (Fe-S) centers, to quinones in the respiratory chain. The immediate electron acceptor for the enzyme in this species is believed to be plastoquinone. Couples the redox reaction to proton translocation (for every two electrons transferred, four hydrogen ions are translocated across the cytoplasmic membrane), and thus conserves the redox energy in a proton gradient. The sequence is that of NAD(P)H-quinone oxidoreductase chain 5 (ndhF) from Synechocystis sp. (strain ATCC 27184 / PCC 6803 / Kazusa).